A 276-amino-acid polypeptide reads, in one-letter code: Ribosomal RNA small subunit methyltransferase I (276 aa).

The protein belongs to the methyltransferase superfamily. RsmI family.

It is found in the cytoplasm. The enzyme catalyses cytidine(1402) in 16S rRNA + S-adenosyl-L-methionine = 2'-O-methylcytidine(1402) in 16S rRNA + S-adenosyl-L-homocysteine + H(+). Functionally, catalyzes the 2'-O-methylation of the ribose of cytidine 1402 (C1402) in 16S rRNA. The polypeptide is Ribosomal RNA small subunit methyltransferase I (Mycoplasma pneumoniae (strain ATCC 29342 / M129 / Subtype 1) (Mycoplasmoides pneumoniae)).